The chain runs to 95 residues: MAISRSEVEHVAKLARLKFSQEEIEEFTVQLSKIIDYVNKLNELDTENVEPTAHIVPIHNVFREDEVKPSMDRDKILMNAPYKENGCFKVPKIIE.

It belongs to the GatC family. As to quaternary structure, heterotrimer of A, B and C subunits.

The enzyme catalyses L-glutamyl-tRNA(Gln) + L-glutamine + ATP + H2O = L-glutaminyl-tRNA(Gln) + L-glutamate + ADP + phosphate + H(+). The catalysed reaction is L-aspartyl-tRNA(Asn) + L-glutamine + ATP + H2O = L-asparaginyl-tRNA(Asn) + L-glutamate + ADP + phosphate + 2 H(+). Functionally, allows the formation of correctly charged Asn-tRNA(Asn) or Gln-tRNA(Gln) through the transamidation of misacylated Asp-tRNA(Asn) or Glu-tRNA(Gln) in organisms which lack either or both of asparaginyl-tRNA or glutaminyl-tRNA synthetases. The reaction takes place in the presence of glutamine and ATP through an activated phospho-Asp-tRNA(Asn) or phospho-Glu-tRNA(Gln). This chain is Aspartyl/glutamyl-tRNA(Asn/Gln) amidotransferase subunit C, found in Thermoanaerobacter pseudethanolicus (strain ATCC 33223 / 39E) (Clostridium thermohydrosulfuricum).